We begin with the raw amino-acid sequence, 491 residues long: MKVRVRFCPSPTGTPHVGLIRTALFNWAYARHTGGDFVFRIEDTDAQRDSEESYLALLDALRWLGMDWDEGPEVGGPYAPYRQSQRRDLYLDVIRRLLAAGEAYEAFSTAEEVEARHLAAGRNPKLGYDNFDRDLTEEQRAAFRAEGRQPVVRLRMPDADMTWVDLVRGETTFPVGSVPDFALTRGSGDPLYTLVNPVDDALMKITHVLRGEDLLPSTPRQLALYAALIRIGVTDMTPQFAHLPSVLGEGNKKLSKRDPQSNLFLHRERGFIPEGLLNYLALLGWSIADDRDIFSVQEMVAAFDVADVNSNPARFDQKKADALNAEHIRRLDEAEFVRRLADYFSTHGYDTGLDDARFAEAAALVQTRIVVLGDAWDLLKFLDESSFALDEKSAGKELKDTAVPVLTAALAALKGVGEWTTAQIEDALKVALIDGLELKPRKAFGPVRVAVTGSSISPPLFESLELLGRDRSLERLRAGRDHAAAAVTMDA.

Positions proline 9–leucine 19 match the 'HIGH' region motif. The short motif at lysine 253–arginine 257 is the 'KMSKS' region element. Lysine 256 serves as a coordination point for ATP.

This sequence belongs to the class-I aminoacyl-tRNA synthetase family. Glutamate--tRNA ligase type 1 subfamily. In terms of assembly, monomer.

The protein resides in the cytoplasm. It catalyses the reaction tRNA(Glu) + L-glutamate + ATP = L-glutamyl-tRNA(Glu) + AMP + diphosphate. Functionally, catalyzes the attachment of glutamate to tRNA(Glu) in a two-step reaction: glutamate is first activated by ATP to form Glu-AMP and then transferred to the acceptor end of tRNA(Glu). This chain is Glutamate--tRNA ligase, found in Mycolicibacterium gilvum (strain PYR-GCK) (Mycobacterium gilvum (strain PYR-GCK)).